We begin with the raw amino-acid sequence, 220 residues long: Ribosomal RNA large subunit methyltransferase E (220 aa).

S-adenosyl-L-methionine contacts are provided by Gly-60, Trp-62, Asp-92, Asp-108, and Asp-133. Lys-173 functions as the Proton acceptor in the catalytic mechanism.

The protein belongs to the class I-like SAM-binding methyltransferase superfamily. RNA methyltransferase RlmE family.

Its subcellular location is the cytoplasm. It carries out the reaction uridine(2552) in 23S rRNA + S-adenosyl-L-methionine = 2'-O-methyluridine(2552) in 23S rRNA + S-adenosyl-L-homocysteine + H(+). Its function is as follows. Specifically methylates the uridine in position 2552 of 23S rRNA at the 2'-O position of the ribose in the fully assembled 50S ribosomal subunit. The polypeptide is Ribosomal RNA large subunit methyltransferase E (Paraburkholderia phytofirmans (strain DSM 17436 / LMG 22146 / PsJN) (Burkholderia phytofirmans)).